We begin with the raw amino-acid sequence, 489 residues long: Putative general negative regulator of transcription C16C9.04c (489 aa).

The segment at Cys18–Arg61 adopts an RING-type zinc-finger fold. A coiled-coil region spans residues Ala76–Asn109. Residues Asn116 to Ser198 form the RRM domain. Residues Tyr199 to Gly226 form a C3H1-type zinc finger. Polar residues-rich tracts occupy residues Leu246–Ser261 and Glu466–Asn479. Disordered regions lie at residues Leu246–Thr268 and Val458–Ser489.

The protein resides in the nucleus. May negatively regulate the basal and activated transcription of many genes. This chain is Putative general negative regulator of transcription C16C9.04c, found in Schizosaccharomyces pombe (strain 972 / ATCC 24843) (Fission yeast).